A 438-amino-acid chain; its full sequence is Thymidine phosphorylase (438 aa).

Belongs to the thymidine/pyrimidine-nucleoside phosphorylase family. Homodimer.

It carries out the reaction thymidine + phosphate = 2-deoxy-alpha-D-ribose 1-phosphate + thymine. It participates in pyrimidine metabolism; dTMP biosynthesis via salvage pathway; dTMP from thymine: step 1/2. Its function is as follows. The enzymes which catalyze the reversible phosphorolysis of pyrimidine nucleosides are involved in the degradation of these compounds and in their utilization as carbon and energy sources, or in the rescue of pyrimidine bases for nucleotide synthesis. This Burkholderia orbicola (strain MC0-3) protein is Thymidine phosphorylase.